The primary structure comprises 291 residues: Omega-amidase NIT3 (291 aa).

One can recognise a CN hydrolase domain in the interval 11–264 (IKVALVQLSG…EEIIYAELDP (254 aa)). Threonine 34 bears the Phosphothreonine mark. Glutamate 53 (proton acceptor) is an active-site residue. The active-site Proton donor is the lysine 128. The active-site Nucleophile is cysteine 169.

It belongs to the carbon-nitrogen hydrolase superfamily. NIT1/NIT2 family. As to quaternary structure, homodimer.

It catalyses the reaction a monoamide of a dicarboxylate + H2O = a dicarboxylate + NH4(+). Possesses omega-amidase activity. The role of omega-amidase is to remove potentially toxic intermediates by converting 2-oxoglutaramate and 2-oxosuccinamate to biologically useful 2-oxoglutarate and oxaloacetate, respectively. This is Omega-amidase NIT3 (NIT3) from Saccharomyces cerevisiae (strain ATCC 204508 / S288c) (Baker's yeast).